A 265-amino-acid polypeptide reads, in one-letter code: tRNA pseudouridine synthase A (265 aa).

Asp-52 acts as the Nucleophile in catalysis. Tyr-110 provides a ligand contact to substrate. A disordered region spans residues 244–265 (FYRDGPPARTPGGTTDAEEDEG).

The protein belongs to the tRNA pseudouridine synthase TruA family. Homodimer.

It carries out the reaction uridine(38/39/40) in tRNA = pseudouridine(38/39/40) in tRNA. In terms of biological role, formation of pseudouridine at positions 38, 39 and 40 in the anticodon stem and loop of transfer RNAs. This is tRNA pseudouridine synthase A from Myxococcus xanthus.